A 306-amino-acid chain; its full sequence is Curved DNA-binding protein (306 aa).

The region spanning 5–69 is the J domain; that stretch reads DYYAIMGVKP…QRRAEYDQLW (65 aa).

The protein resides in the cytoplasm. It is found in the nucleoid. Functionally, DNA-binding protein that preferentially recognizes a curved DNA sequence. It is probably a functional analog of DnaJ; displays overlapping activities with DnaJ, but functions under different conditions, probably acting as a molecular chaperone in an adaptive response to environmental stresses other than heat shock. Lacks autonomous chaperone activity; binds native substrates and targets them for recognition by DnaK. Its activity is inhibited by the binding of CbpM. The sequence is that of Curved DNA-binding protein from Salmonella arizonae (strain ATCC BAA-731 / CDC346-86 / RSK2980).